The following is a 44-amino-acid chain: Cytochrome b559 subunit beta (44 aa).

Residues 19–35 (WLAVHTLAVPTVFFVGA) form a helical membrane-spanning segment. Residue His23 coordinates heme.

The protein belongs to the PsbE/PsbF family. Heterodimer of an alpha subunit and a beta subunit. PSII is composed of 1 copy each of membrane proteins PsbA, PsbB, PsbC, PsbD, PsbE, PsbF, PsbH, PsbI, PsbJ, PsbK, PsbL, PsbM, PsbT, PsbX, PsbY, PsbZ, Psb30/Ycf12, peripheral proteins PsbO, CyanoQ (PsbQ), PsbU, PsbV and a large number of cofactors. It forms dimeric complexes. Heme b serves as cofactor.

Its subcellular location is the cellular thylakoid membrane. Functionally, this b-type cytochrome is tightly associated with the reaction center of photosystem II (PSII). PSII is a light-driven water:plastoquinone oxidoreductase that uses light energy to abstract electrons from H(2)O, generating O(2) and a proton gradient subsequently used for ATP formation. It consists of a core antenna complex that captures photons, and an electron transfer chain that converts photonic excitation into a charge separation. This Crocosphaera subtropica (strain ATCC 51142 / BH68) (Cyanothece sp. (strain ATCC 51142)) protein is Cytochrome b559 subunit beta.